The chain runs to 111 residues: Parvalbumin alpha (111 aa).

Residue T1 is modified to N-acetylthreonine; in form C2. 2 consecutive EF-hand domains span residues 40–75 (KPDDTLKEVFGILDQDKSGYIEEEELKFVLKGFAAG) and 79–111 (LTANETKALLKAGDQDGDDKIGVDEFTNLVKAA). The Ca(2+) site is built by D53, D55, S57, Y59, E61, E64, D92, D94, D96, K98, and E103.

Belongs to the parvalbumin family. In terms of processing, acetylation of Thr-1 converts C1 to C2.

In muscle, parvalbumin is thought to be involved in relaxation after contraction. It binds two calcium ions. The chain is Parvalbumin alpha from Latimeria chalumnae (Coelacanth).